The sequence spans 147 residues: Small ribosomal subunit protein uS12 (147 aa).

This sequence belongs to the universal ribosomal protein uS12 family. Part of the 30S ribosomal subunit.

Functionally, with S4 and S5 plays an important role in translational accuracy. Located at the interface of the 30S and 50S subunits. The protein is Small ribosomal subunit protein uS12 of Thermofilum pendens (strain DSM 2475 / Hrk 5).